Reading from the N-terminus, the 412-residue chain is Argininosuccinate synthase (412 aa).

ATP-binding positions include 16–24 and alanine 44; that span reads AYSGGLDTS. Residues tyrosine 96 and serine 101 each contribute to the L-citrulline site. Position 126 (glycine 126) interacts with ATP. The L-aspartate site is built by threonine 128, asparagine 132, and aspartate 133. Asparagine 132 provides a ligand contact to L-citrulline. L-citrulline is bound by residues arginine 136, serine 185, serine 194, glutamate 270, and tyrosine 282.

This sequence belongs to the argininosuccinate synthase family. Type 1 subfamily. In terms of assembly, homotetramer.

The protein resides in the cytoplasm. It carries out the reaction L-citrulline + L-aspartate + ATP = 2-(N(omega)-L-arginino)succinate + AMP + diphosphate + H(+). The protein operates within amino-acid biosynthesis; L-arginine biosynthesis; L-arginine from L-ornithine and carbamoyl phosphate: step 2/3. This is Argininosuccinate synthase from Shewanella baltica (strain OS185).